The sequence spans 469 residues: MSTESEISVRIRGIYSTALTKLFLDKGFKIVQPSDVIAERLGIEKSYEDFDVDIYDRNHGITIVGTKVEEVRKALEEELVDVFFRKLPYKLYGVYKGIVVKRDDRYVYVDIGNAIGTVLVEELPDAVEGDEVVVQVKKHNVLPHLSIMITIPGDYAVLIPKPIGVQRHVKISRKIRDPEERERLRILGLSVNLGEWGILWRTAAAYKEWSLLRDELVRLSKIADKLKEADKYSAPAEIIEGRSIYEVEFGGGAKKKLDEIRNRVVPTIEGHHQYKSYDPEFTLAVEVAEGILAKMPSQRQKISEGFVEAITNSKGPRVGWIFTLNHVKPDGQVIKIGPGEVIEVSSRPLRVKIRRNLRPGRVYDGLEVPIEPGDYAITEIEAGKWWFVHRYYDRNGNLKGEFYNINTPVEIYPDKARYVDLEVDIVKWPDGKKEIIDKEKLKEHYEDGIISEKLYKAVLRIVQEVYERV.

It belongs to the FAU-1 family.

Its function is as follows. Probable RNase involved in rRNA stability through maturation and/or degradation of precursor rRNAs. Binds to RNA in loop regions with AU-rich sequences. This is Probable ribonuclease FAU-1 from Pyrococcus abyssi (strain GE5 / Orsay).